Consider the following 450-residue polypeptide: Phosphoglucosamine mutase (450 aa).

The active-site Phosphoserine intermediate is the Ser-102. 4 residues coordinate Mg(2+): Ser-102, Asp-243, Asp-245, and Asp-247. Ser-102 bears the Phosphoserine mark.

It belongs to the phosphohexose mutase family. The cofactor is Mg(2+). Post-translationally, activated by phosphorylation.

The enzyme catalyses alpha-D-glucosamine 1-phosphate = D-glucosamine 6-phosphate. Its function is as follows. Catalyzes the conversion of glucosamine-6-phosphate to glucosamine-1-phosphate. The polypeptide is Phosphoglucosamine mutase (Rhizobium leguminosarum bv. trifolii (strain WSM2304)).